The sequence spans 265 residues: Adenosylcobinamide-GDP ribazoletransferase (265 aa).

7 helical membrane passes run 40–60 (IAYA…VVLV), 67–87 (LPAF…TGAF), 121–141 (GGCA…ALVA), 150–170 (LALV…LLAL), 191–211 (LACA…GFGI), 213–233 (TAFA…RLSG), and 243–263 (VAGA…LIFP).

The protein belongs to the CobS family. It depends on Mg(2+) as a cofactor.

The protein resides in the cell inner membrane. It catalyses the reaction alpha-ribazole + adenosylcob(III)inamide-GDP = adenosylcob(III)alamin + GMP + H(+). The catalysed reaction is alpha-ribazole 5'-phosphate + adenosylcob(III)inamide-GDP = adenosylcob(III)alamin 5'-phosphate + GMP + H(+). It participates in cofactor biosynthesis; adenosylcobalamin biosynthesis; adenosylcobalamin from cob(II)yrinate a,c-diamide: step 7/7. Functionally, joins adenosylcobinamide-GDP and alpha-ribazole to generate adenosylcobalamin (Ado-cobalamin). Also synthesizes adenosylcobalamin 5'-phosphate from adenosylcobinamide-GDP and alpha-ribazole 5'-phosphate. This Xanthobacter autotrophicus (strain ATCC BAA-1158 / Py2) protein is Adenosylcobinamide-GDP ribazoletransferase.